The following is a 551-amino-acid chain: Lysine--tRNA ligase (551 aa).

The 'HIGH' region motif lies at 54-62 (PSGLPHIGT). Positions 303–307 (KISKS) match the 'KMSKS' region motif. K306 lines the ATP pocket.

The protein belongs to the class-I aminoacyl-tRNA synthetase family.

The protein resides in the cytoplasm. The enzyme catalyses tRNA(Lys) + L-lysine + ATP = L-lysyl-tRNA(Lys) + AMP + diphosphate. This Brucella melitensis biotype 1 (strain ATCC 23456 / CCUG 17765 / NCTC 10094 / 16M) protein is Lysine--tRNA ligase.